A 280-amino-acid chain; its full sequence is Large ribosomal subunit protein uL2 (280 aa).

A disordered region spans residues 213–280; that stretch reads RWKGKRPSVR…RRRTGKKHAR (68 aa). Positions 268-280 are enriched in basic residues; it reads IVRRRRTGKKHAR.

The protein belongs to the universal ribosomal protein uL2 family. Part of the 50S ribosomal subunit. Forms a bridge to the 30S subunit in the 70S ribosome.

One of the primary rRNA binding proteins. Required for association of the 30S and 50S subunits to form the 70S ribosome, for tRNA binding and peptide bond formation. It has been suggested to have peptidyltransferase activity; this is somewhat controversial. Makes several contacts with the 16S rRNA in the 70S ribosome. This chain is Large ribosomal subunit protein uL2, found in Mycobacterium leprae (strain Br4923).